An 851-amino-acid polypeptide reads, in one-letter code: Phosphatidylinositol 4-kinase pik1 (851 aa).

One can recognise a PIK helical domain in the interval 1 to 123 (MPSSNSGNEL…KICKRLYNRI (123 aa)). Residues Ser-202, Ser-219, Ser-222, and Ser-235 each carry the phosphoserine modification. Phosphotyrosine is present on Tyr-236. The disordered stretch occupies residues 384–404 (LQDSTDNDISESESEGGDLSM). Residues 388 to 399 (TDNDISESESEG) show a composition bias toward acidic residues. Residues 558 to 836 (YAKKERIRKS…LIQKANCSVW (279 aa)) enclose the PI3K/PI4K catalytic domain. Residues 564 to 570 (IRKSSPY) are G-loop. The tract at residues 706 to 714 (QLKDRHNGN) is catalytic loop. The segment at 725 to 749 (HIDFGFLLTNTPGNVGFESAPFKLT) is activation loop.

It belongs to the PI3/PI4-kinase family. Interacts with cdc4 and cam2.

The protein localises to the golgi apparatus. The protein resides in the nucleus. It carries out the reaction a 1,2-diacyl-sn-glycero-3-phospho-(1D-myo-inositol) + ATP = a 1,2-diacyl-sn-glycero-3-phospho-(1D-myo-inositol 4-phosphate) + ADP + H(+). Functionally, acts on phosphatidylinositol (PI) in the first committed step in the production of the second messenger inositol 1,4,5,-trisphosphate. PIK1 is part of a nuclear phosphoinositide cycle and could control cytokinesis through the actin cytoskeleton. The chain is Phosphatidylinositol 4-kinase pik1 (pik1) from Schizosaccharomyces pombe (strain 972 / ATCC 24843) (Fission yeast).